A 114-amino-acid chain; its full sequence is Probable 4-amino-4-deoxy-L-arabinose-phosphoundecaprenol flippase subunit ArnE (114 aa).

Transmembrane regions (helical) follow at residues 41–61 (GWLWLALFSLGLGLLVWLLVL) and 68–88 (VAYPMLSLNFVFITLIAHFVF). In terms of domain architecture, EamA spans 43-112 (LWLALFSLGL…VIGGVLLLSR (70 aa)).

The protein belongs to the ArnE family. As to quaternary structure, heterodimer of ArnE and ArnF.

The protein resides in the cell inner membrane. It participates in bacterial outer membrane biogenesis; lipopolysaccharide biosynthesis. Its function is as follows. Translocates 4-amino-4-deoxy-L-arabinose-phosphoundecaprenol (alpha-L-Ara4N-phosphoundecaprenol) from the cytoplasmic to the periplasmic side of the inner membrane. The sequence is that of Probable 4-amino-4-deoxy-L-arabinose-phosphoundecaprenol flippase subunit ArnE from Pseudomonas fluorescens (strain ATCC BAA-477 / NRRL B-23932 / Pf-5).